Consider the following 319-residue polypeptide: Acetyl-coenzyme A carboxylase carboxyl transferase subunit alpha (319 aa).

In terms of domain architecture, CoA carboxyltransferase C-terminal spans N32 to A293.

Belongs to the AccA family. In terms of assembly, acetyl-CoA carboxylase is a heterohexamer composed of biotin carboxyl carrier protein (AccB), biotin carboxylase (AccC) and two subunits each of ACCase subunit alpha (AccA) and ACCase subunit beta (AccD).

Its subcellular location is the cytoplasm. The enzyme catalyses N(6)-carboxybiotinyl-L-lysyl-[protein] + acetyl-CoA = N(6)-biotinyl-L-lysyl-[protein] + malonyl-CoA. The protein operates within lipid metabolism; malonyl-CoA biosynthesis; malonyl-CoA from acetyl-CoA: step 1/1. Component of the acetyl coenzyme A carboxylase (ACC) complex. First, biotin carboxylase catalyzes the carboxylation of biotin on its carrier protein (BCCP) and then the CO(2) group is transferred by the carboxyltransferase to acetyl-CoA to form malonyl-CoA. This Xylella fastidiosa (strain 9a5c) protein is Acetyl-coenzyme A carboxylase carboxyl transferase subunit alpha.